The chain runs to 291 residues: Ribosomal RNA small subunit methyltransferase H (291 aa).

S-adenosyl-L-methionine-binding positions include 25–27, Asp45, Phe73, Asp88, and Gln95; that span reads GGH.

Belongs to the methyltransferase superfamily. RsmH family.

It localises to the cytoplasm. It carries out the reaction cytidine(1402) in 16S rRNA + S-adenosyl-L-methionine = N(4)-methylcytidine(1402) in 16S rRNA + S-adenosyl-L-homocysteine + H(+). Specifically methylates the N4 position of cytidine in position 1402 (C1402) of 16S rRNA. The chain is Ribosomal RNA small subunit methyltransferase H from Flavobacterium psychrophilum (strain ATCC 49511 / DSM 21280 / CIP 103535 / JIP02/86).